A 146-amino-acid chain; its full sequence is Villin-like protein ABP41 (146 aa).

Belongs to the villin/gelsolin family. As to quaternary structure, binds to actin. Expressed in pollen (at protein level).

Its subcellular location is the cytoplasm. The protein localises to the cytoskeleton. Its function is as follows. Ca(2+)-dependent actin filament-severing protein that is required for pollen tube growth. Probably regulates the dynamics of the actin cytoskeleton. It can promote the assembly of monomers into filaments (nucleation) as well as sever filaments already formed. The protein is Villin-like protein ABP41 of Lilium davidii (David's lily).